The sequence spans 255 residues: Phosphate import ATP-binding protein PstB (255 aa).

The ABC transporter domain occupies 9 to 250; sequence IAVQNLNFYY…PKIQRTEDYI (242 aa). 41-48 contacts ATP; sequence GPSGCGKS.

The protein belongs to the ABC transporter superfamily. Phosphate importer (TC 3.A.1.7) family. As to quaternary structure, the complex is composed of two ATP-binding proteins (PstB), two transmembrane proteins (PstC and PstA) and a solute-binding protein (PstS).

It is found in the cell inner membrane. The enzyme catalyses phosphate(out) + ATP + H2O = ADP + 2 phosphate(in) + H(+). Part of the ABC transporter complex PstSACB involved in phosphate import. Responsible for energy coupling to the transport system. The protein is Phosphate import ATP-binding protein PstB of Haemophilus influenzae (strain 86-028NP).